Here is a 245-residue protein sequence, read N- to C-terminus: NAD-dependent protein deacetylase (245 aa).

Residues 1–245 (MLLLDKINEL…SIGKVLETVI (245 aa)) enclose the Deacetylase sirtuin-type domain. NAD(+)-binding residues include Ala26, Thr30, Phe37, Arg38, Gln107, Ile109, Asp110, and His125. Phe37 serves as a coordination point for nicotinamide. Ile109 and Asp110 together coordinate nicotinamide. The Proton acceptor role is filled by His125. Cys133, Cys136, Cys155, and Cys158 together coordinate Zn(2+). Thr196, Ser197, Asn219, and Ile237 together coordinate NAD(+).

The protein belongs to the sirtuin family. Class U subfamily. Requires Zn(2+) as cofactor.

The protein resides in the cytoplasm. It carries out the reaction N(6)-acetyl-L-lysyl-[protein] + NAD(+) + H2O = 2''-O-acetyl-ADP-D-ribose + nicotinamide + L-lysyl-[protein]. In terms of biological role, NAD-dependent protein deacetylase which modulates the activities of several enzymes which are inactive in their acetylated form. The protein is NAD-dependent protein deacetylase of Clostridium acetobutylicum (strain ATCC 824 / DSM 792 / JCM 1419 / IAM 19013 / LMG 5710 / NBRC 13948 / NRRL B-527 / VKM B-1787 / 2291 / W).